A 419-amino-acid chain; its full sequence is tRNA (guanine-N(7)-)-methyltransferase non-catalytic subunit wuho (419 aa).

The segment covering 51–61 (STAEQQSAAAE) has biased composition (low complexity). Residues 51 to 75 (STAEQQSAAAETGGGSVVEGEEPKD) form a disordered region. 3 WD repeats span residues 87 to 127 (APTV…AQLV), 174 to 213 (GHLS…DIHS), and 217 to 255 (GHKE…ELLR).

Belongs to the WD repeat TRM82 family. Forms a heterodimer with the catalytic subunit Mettl1. Interacts with mei-P26 and weakly interacts with bgcn; required for the function or formation of the mei-P26-bgcn-bam-sxl complex. Interacts with nanos; may be involved in mei-P26-dependent derepression of the BMP signaling pathway. Interacts with Myc; the interaction may be mediated by mei-P26 and may be involved in the regulation of ribosome biogenesis. In terms of tissue distribution, in testis, it is present at high level in hub cells, a niche for germline stem cells of testis. Ubiquitously expressed in all testicular cells throughout spermatogenesis. Ubiquitously expressed in all germline and somatic cells of the ovary.

Its subcellular location is the nucleus. The protein localises to the cytoplasm. The protein operates within tRNA modification; N(7)-methylguanine-tRNA biosynthesis. Functionally, required for the Mettl1-dependent formation of N(7)-methylguanine at position 46 (m7G46) in tRNA. In the Mettl1-wuho methyltransferase complex, it is required to stabilize and induce conformational changes of the catalytic subunit. Required for binding of nanos mRNA and repression of translation by the mei-P26-bgcn-bam-sxl complex. May cooperate with mei-P26 and nanos to derepress the BMP signaling pathway. May cooperate with mei-P26 to suppress expression of a subset of microRNAs. May cooperate with mei-P26 to regulate bam expression levels in germline cells during gametogenesis. Required to promote mitosis to meiosis transition during gametogenesis. May regulate germline cell division in part by regulating ribosome biogenesis. The sequence is that of tRNA (guanine-N(7)-)-methyltransferase non-catalytic subunit wuho from Drosophila willistoni (Fruit fly).